A 449-amino-acid polypeptide reads, in one-letter code: Phosphomannomutase (449 aa).

S97 (phosphoserine intermediate) is an active-site residue. S97, D237, D239, and D241 together coordinate Mg(2+).

It belongs to the phosphohexose mutase family. Mg(2+) serves as cofactor.

The catalysed reaction is alpha-D-mannose 1-phosphate = D-mannose 6-phosphate. It participates in amino-acid biosynthesis. Its function is as follows. Catalyzes the formation of mannose-1-P from mannose-6-P. Can also use glucose-6-P. The polypeptide is Phosphomannomutase (manB) (Methanocaldococcus jannaschii (strain ATCC 43067 / DSM 2661 / JAL-1 / JCM 10045 / NBRC 100440) (Methanococcus jannaschii)).